We begin with the raw amino-acid sequence, 90 residues long: MSSSITAPEGIINPPIDELLEATDSKYSLVIYAAKRARQINAYYSQLGEGLLEYVGPLVDTHVHEKPLSIALREINAGLLTSEAIEGPAQ.

This sequence belongs to the RNA polymerase subunit omega family. As to quaternary structure, the RNAP catalytic core consists of 2 alpha, 1 beta, 1 beta' and 1 omega subunit. When a sigma factor is associated with the core the holoenzyme is formed, which can initiate transcription.

It catalyses the reaction RNA(n) + a ribonucleoside 5'-triphosphate = RNA(n+1) + diphosphate. Its function is as follows. Promotes RNA polymerase assembly. Latches the N- and C-terminal regions of the beta' subunit thereby facilitating its interaction with the beta and alpha subunits. Required for kasugamycin production and aerial mycelium formation in S.kasugaensis and responsible for pleiotropy. In Streptomyces kasugaensis, this protein is DNA-directed RNA polymerase subunit omega (rpoZ).